The following is a 351-amino-acid chain: Histidine-rich glycoprotein (351 aa).

Positions 1–23 (MFTSLKKVATFSFLVWISQYSGS) are cleaved as a signal peptide. Positions 24–47 (NSCSSSLVKHIPQTGSNLTFDRVL) are excised as a propeptide. An N-linked (GlcNAc...) asparagine glycan is attached at Asn40. The segment covering 57–91 (LHEEHHHHHPEEHHEPHHEEHHHHHPEEHHEPHHE) has biased composition (basic and acidic residues). Positions 57–351 (LHEEHHHHHP…DAHHHHHHHH (295 aa)) are disordered. 6 repeat units span residues 59 to 74 (EEHH…EPHH), 75 to 90 (EEHH…EPHH), 91 to 107 (EEHH…HHHH), 108 to 123 (PPHH…HHHH), 124 to 138 (AAHH…HHHH), and 139 to 153 (AAHH…HHHH). The 2 X 16 AA tandem repeats stretch occupies residues 59 to 90 (EEHHHHHPEEHHEPHHEEHHHHHPEEHHEPHH). The 2 X 17 AA tandem repeats stretch occupies residues 91–123 (EEHHHHHPHPHHHHHHHPPHHHHHLGHHHHHHH). Over residues 92–351 (EHHHHHPHPH…DAHHHHHHHH (260 aa)) the composition is skewed to basic residues. The 2 X 15 AA tandem repeats stretch occupies residues 124 to 153 (AAHHHHHEEHHHHHHAAHHHHHEEHHHHHH). The 18 X 10 AA tandem repeats stretch occupies residues 173-351 (APHHHHHHHH…DAHHHHHHHH (179 aa)).

The protein is Histidine-rich glycoprotein of Plasmodium lophurae.